The sequence spans 269 residues: MNEICDTAVCMPDVQSSADTRQIAIDKVGIKSIRHPVRVADKADGVQHTIANFNMYVFLPHNFKGTHMSRFIEILNTREREISVENFEGMLRQMVERLEAESGYIEMTFPYFINKSAPVSGVQSMLDYEVTFVGAIENGQYTHTTKVVVPVTSLCPCSKKISEYGAHNQRSHVTVTAKTRGFLWIEDLVRKVEDQASCELFGLLKRPDEKYVTERAYDNPKFVEDIVRDVAAAMNAEPLIDAYVVEAENFESIHNHSAYALIEHDKRKK.

Belongs to the GTP cyclohydrolase IV family.

It catalyses the reaction GTP + H2O = 7,8-dihydroneopterin 3'-triphosphate + formate + H(+). It functions in the pathway cofactor biosynthesis; 7,8-dihydroneopterin triphosphate biosynthesis; 7,8-dihydroneopterin triphosphate from GTP: step 1/1. In terms of biological role, converts GTP to 7,8-dihydroneopterin triphosphate. This is GTP cyclohydrolase FolE2 from Thiobacillus denitrificans (strain ATCC 25259 / T1).